Here is a 139-residue protein sequence, read N- to C-terminus: Translation initiation factor 5A (139 aa).

A Hypusine modification is found at K36.

It belongs to the eIF-5A family.

The protein resides in the cytoplasm. Its function is as follows. Functions by promoting the formation of the first peptide bond. This is Translation initiation factor 5A (eif5a) from Aeropyrum pernix (strain ATCC 700893 / DSM 11879 / JCM 9820 / NBRC 100138 / K1).